The chain runs to 61 residues: Large ribosomal subunit protein bL28 (61 aa).

Residues 1–26 are disordered; the sequence is MAKDFVTGRKTTFGKKRSHALNQTNR.

The protein belongs to the bacterial ribosomal protein bL28 family.

This Ligilactobacillus salivarius (strain UCC118) (Lactobacillus salivarius) protein is Large ribosomal subunit protein bL28.